The chain runs to 957 residues: Glycine dehydrogenase (decarboxylating) (957 aa).

Lys708 carries the post-translational modification N6-(pyridoxal phosphate)lysine.

This sequence belongs to the GcvP family. In terms of assembly, the glycine cleavage system is composed of four proteins: P, T, L and H. The cofactor is pyridoxal 5'-phosphate.

It carries out the reaction N(6)-[(R)-lipoyl]-L-lysyl-[glycine-cleavage complex H protein] + glycine + H(+) = N(6)-[(R)-S(8)-aminomethyldihydrolipoyl]-L-lysyl-[glycine-cleavage complex H protein] + CO2. Its function is as follows. The glycine cleavage system catalyzes the degradation of glycine. The P protein binds the alpha-amino group of glycine through its pyridoxal phosphate cofactor; CO(2) is released and the remaining methylamine moiety is then transferred to the lipoamide cofactor of the H protein. The polypeptide is Glycine dehydrogenase (decarboxylating) (Shigella boydii serotype 4 (strain Sb227)).